The chain runs to 353 residues: Nicotinate-nucleotide--dimethylbenzimidazole phosphoribosyltransferase (353 aa).

Glu-320 serves as the catalytic Proton acceptor.

Belongs to the CobT family.

It catalyses the reaction 5,6-dimethylbenzimidazole + nicotinate beta-D-ribonucleotide = alpha-ribazole 5'-phosphate + nicotinate + H(+). The protein operates within nucleoside biosynthesis; alpha-ribazole biosynthesis; alpha-ribazole from 5,6-dimethylbenzimidazole: step 1/2. Catalyzes the synthesis of alpha-ribazole-5'-phosphate from nicotinate mononucleotide (NAMN) and 5,6-dimethylbenzimidazole (DMB). The polypeptide is Nicotinate-nucleotide--dimethylbenzimidazole phosphoribosyltransferase (Syntrophotalea carbinolica (strain DSM 2380 / NBRC 103641 / GraBd1) (Pelobacter carbinolicus)).